Consider the following 515-residue polypeptide: SWI/SNF-related matrix-associated actin-dependent regulator of chromatin subfamily D member 1 (515 aa).

The segment at 1–103 (MAARAGFQSV…SGMDQSRKRP (103 aa)) is disordered. A compositionally biased stretch (gly residues) spans 14-23 (GGAGASGGAG). Residues 43–167 (APGQGLYRSP…DQTIMRKRLD (125 aa)) are interaction with ESR1, NR1H4, NR3C1, PGR and SMARCA4. Residues R68 and R88 each carry the asymmetric dimethylarginine modification. A Glycyl lysine isopeptide (Lys-Gly) (interchain with G-Cter in SUMO2) cross-link involves residue K101. Residues 168–474 (IQEALKRPIK…TMTDVVGNPE (307 aa)) are interaction with SMARCC1 and SMARCC2. Residues 180-515 (RKLRIFISNT…LEQALGIRNT (336 aa)) form a necessary for GR/NR3C1-mediated remodeling and transcription from chromatin; required for GR/NR3C1 interaction with the BRG1/SMARCA4 complex in vivo region. At T203 the chain carries Phosphothreonine. At K223 the chain carries N6-acetyllysine. One can recognise an SWIB/MDM2 domain in the interval 290–367 (YQPPQFKLDP…PQRLHALLMP (78 aa)). A coiled-coil region spans residues 412 to 440 (ASQQEIATLDNKIHETIETINQLKTQREF).

The protein belongs to the SMARCD family. In terms of assembly, component of the multiprotein chromatin-remodeling complexes SWI/SNF: SWI/SNF-A (BAF), SWI/SNF-B (PBAF) and related complexes. The canonical complex contains a catalytic subunit (either SMARCA4/BRG1/BAF190A or SMARCA2/BRM/BAF190B), and at least SMARCE1, ACTL6A/BAF53, SMARCC1/BAF155, SMARCC2/BAF170, and SMARCB1/SNF5/BAF47. Other subunits specific to each of the complexes may also be present permitting several possible combinations developmentally and tissue specific. Component of the BAF complex, which includes at least actin (ACTB), ARID1A/BAF250A, ARID1B/BAF250B, SMARCA2/BRM, SMARCA4/BRG1/BAF190A, ACTL6A/BAF53, ACTL6B/BAF53B, SMARCE1/BAF57, SMARCC1/BAF155, SMARCC2/BAF170, SMARCB1/SNF5/INI1, and one or more SMARCD1/BAF60A, SMARCD2/BAF60B, or SMARCD3/BAF60C. In muscle cells, the BAF complex also contains DPF3. Component of neural progenitors-specific chromatin remodeling complex (npBAF complex) composed of at least, ARID1A/BAF250A or ARID1B/BAF250B, SMARCD1/BAF60A, SMARCD3/BAF60C, SMARCA2/BRM/BAF190B, SMARCA4/BRG1/BAF190A, SMARCB1/BAF47, SMARCC1/BAF155, SMARCE1/BAF57, SMARCC2/BAF170, PHF10/BAF45A, ACTL6A/BAF53A and actin. Component of neuron-specific chromatin remodeling complex (nBAF complex) composed of at least, ARID1A/BAF250A or ARID1B/BAF250B, SMARCD1/BAF60A, SMARCD3/BAF60C, SMARCA2/BRM/BAF190B, SMARCA4/BRG1/BAF190A, SMARCB1/BAF47, SMARCC1/BAF155, SMARCE1/BAF57, SMARCC2/BAF170, DPF1/BAF45B, DPF3/BAF45C, ACTL6B/BAF53B and actin. Component of the SWI/SNF-B (PBAF) chromatin remodeling complex, at least composed of SMARCA4/BRG1, SMARCB1/BAF47/SNF5, ACTL6A/BAF53A or ACTL6B/BAF53B, SMARCE1/BAF57, SMARCD1/BAF60A, SMARCD2/BAF60B, perhaps SMARCD3/BAF60C, SMARCC1/BAF155, SMARCC2/BAF170, PBRM1/BAF180, ARID2/BAF200 and actin (ACTB). Component of SWI/SNF (GBAF) subcomplex, which includes at least BICRA or BICRAL (mutually exclusive), BRD9, SS18, SMARCA2/BRM, SMARCA4/BRG1/BAF190A, ACTL6A/BAF53, SMARCC1/BAF155, and SMARCD1/BAF60A. Specifically interacts with the VDR heterodimer complex. Interacts with ESR1, NR3C1, NR1H4, PGR, SMARCA4, SMARCC1 and SMARCC2. Interacts with DPF2. Interacts with DPF3a (isoform 2 of DPF3/BAF45C) and with HDGFL2 in a DPF3a-dependent manner. Interacts with FOS, FOSB isoform 1 and 2, FOSL1 and FOSL2. In terms of tissue distribution, expressed in all tissues tested, including brain, heart, kidney, liver, lung, muscle, pancreas and placenta.

The protein resides in the nucleus. Involved in transcriptional activation and repression of select genes by chromatin remodeling (alteration of DNA-nucleosome topology). Component of SWI/SNF chromatin remodeling complexes that carry out key enzymatic activities, changing chromatin structure by altering DNA-histone contacts within a nucleosome in an ATP-dependent manner. Belongs to the neural progenitors-specific chromatin remodeling complex (npBAF complex) and the neuron-specific chromatin remodeling complex (nBAF complex). During neural development a switch from a stem/progenitor to a postmitotic chromatin remodeling mechanism occurs as neurons exit the cell cycle and become committed to their adult state. The transition from proliferating neural stem/progenitor cells to postmitotic neurons requires a switch in subunit composition of the npBAF and nBAF complexes. As neural progenitors exit mitosis and differentiate into neurons, npBAF complexes which contain ACTL6A/BAF53A and PHF10/BAF45A, are exchanged for homologous alternative ACTL6B/BAF53B and DPF1/BAF45B or DPF3/BAF45C subunits in neuron-specific complexes (nBAF). The npBAF complex is essential for the self-renewal/proliferative capacity of the multipotent neural stem cells. The nBAF complex along with CREST plays a role regulating the activity of genes essential for dendrite growth. Has a strong influence on vitamin D-mediated transcriptional activity from an enhancer vitamin D receptor element (VDRE). May be a link between mammalian SWI-SNF-like chromatin remodeling complexes and the vitamin D receptor (VDR) heterodimer. Mediates critical interactions between nuclear receptors and the BRG1/SMARCA4 chromatin-remodeling complex for transactivation. Interacts with AKIRIN2. The sequence is that of SWI/SNF-related matrix-associated actin-dependent regulator of chromatin subfamily D member 1 from Homo sapiens (Human).